A 206-amino-acid polypeptide reads, in one-letter code: Sec-independent protein translocase protein TatB (206 aa).

Residues 1-21 (MFDIGWTELLVIAVVLIVVVG) form a helical membrane-spanning segment. The interval 104 to 206 (ENKTEVPSAA…VQTKKKKDEA (103 aa)) is disordered. A compositionally biased stretch (low complexity) spans 110-124 (PSAAMSAPTPSMSLP). Pro residues predominate over residues 125 to 138 (ETPPVVPTPAPAPE). 2 stretches are compositionally biased toward low complexity: residues 139-151 (PAAV…AAKP) and 187-196 (ARKPAAPKTP).

It belongs to the TatB family. In terms of assembly, the Tat system comprises two distinct complexes: a TatABC complex, containing multiple copies of TatA, TatB and TatC subunits, and a separate TatA complex, containing only TatA subunits. Substrates initially bind to the TatABC complex, which probably triggers association of the separate TatA complex to form the active translocon.

The protein localises to the cell inner membrane. Functionally, part of the twin-arginine translocation (Tat) system that transports large folded proteins containing a characteristic twin-arginine motif in their signal peptide across membranes. Together with TatC, TatB is part of a receptor directly interacting with Tat signal peptides. TatB may form an oligomeric binding site that transiently accommodates folded Tat precursor proteins before their translocation. The sequence is that of Sec-independent protein translocase protein TatB from Rhizobium etli (strain ATCC 51251 / DSM 11541 / JCM 21823 / NBRC 15573 / CFN 42).